A 92-amino-acid polypeptide reads, in one-letter code: Small ribosomal subunit protein uS19 (92 aa).

The protein belongs to the universal ribosomal protein uS19 family.

Protein S19 forms a complex with S13 that binds strongly to the 16S ribosomal RNA. The sequence is that of Small ribosomal subunit protein uS19 from Streptococcus thermophilus (strain ATCC BAA-491 / LMD-9).